We begin with the raw amino-acid sequence, 739 residues long: AN1-type zinc finger protein 4 (739 aa).

The region spanning 54–129 is the Ubiquitin-like domain; it reads MELFIETLTG…LKLVLAMRGG (76 aa). The span at 246-255 shows a compositional bias: basic residues; sequence KPKKVVKVKP. Disordered stretches follow at residues 246-270 and 287-316; these read KPKK…STAA and LPSG…RPVS. An AN1-type zinc finger spans residues 673-720; the sequence is KKIMKHCFLCGKKTGLATSFECRCGNNFCASHRYAEAHGCTYDYKSAG. Zn(2+) contacts are provided by cysteine 679, cysteine 682, cysteine 694, cysteine 696, cysteine 701, histidine 704, histidine 710, and cysteine 712.

The protein is AN1-type zinc finger protein 4 (Zfand4) of Mus musculus (Mouse).